We begin with the raw amino-acid sequence, 137 residues long: Cellular retinoic acid-binding protein 1 (137 aa).

Positions 21–31 (KALGVNAMLRK) match the Nuclear localization signal motif. 132–134 (RIY) provides a ligand contact to all-trans-retinoate.

It belongs to the calycin superfamily. Fatty-acid binding protein (FABP) family.

The protein resides in the cytoplasm. In terms of biological role, cytosolic CRABPs may regulate the access of retinoic acid to the nuclear retinoic acid receptors. This is Cellular retinoic acid-binding protein 1 (Crabp1) from Mus musculus (Mouse).